Reading from the N-terminus, the 250-residue chain is Cyclopentanol dehydrogenase (250 aa).

NAD(+) is bound by residues Met18, Asp37, Asp63, Val64, Asn90, Tyr155, Lys159, Ile188, Thr190, and Thr193. Tyr155 functions as the Proton acceptor in the catalytic mechanism.

The protein belongs to the short-chain dehydrogenases/reductases (SDR) family.

It catalyses the reaction cyclopentanol + NAD(+) = cyclopentanone + NADH + H(+). It carries out the reaction cyclohexanol + NAD(+) = cyclohexanone + NADH + H(+). Its pathway is alcohol metabolism; cyclopentanol degradation; 5-valerolactone from cyclopentanol: step 1/2. Its function is as follows. Catalyzes the oxidation of cyclopentanol to cyclopentanone and cyclohexanol to cyclohexanone. The activity toward cyclohexanol is 60% that of cyclopentanol. In Comamonas sp. (strain NCIMB 9872), this protein is Cyclopentanol dehydrogenase.